We begin with the raw amino-acid sequence, 448 residues long: Probable glycine dehydrogenase (decarboxylating) subunit 1 (448 aa).

This sequence belongs to the GcvP family. N-terminal subunit subfamily. In terms of assembly, the glycine cleavage system is composed of four proteins: P, T, L and H. In this organism, the P 'protein' is a heterodimer of two subunits.

The enzyme catalyses N(6)-[(R)-lipoyl]-L-lysyl-[glycine-cleavage complex H protein] + glycine + H(+) = N(6)-[(R)-S(8)-aminomethyldihydrolipoyl]-L-lysyl-[glycine-cleavage complex H protein] + CO2. Its function is as follows. The glycine cleavage system catalyzes the degradation of glycine. The P protein binds the alpha-amino group of glycine through its pyridoxal phosphate cofactor; CO(2) is released and the remaining methylamine moiety is then transferred to the lipoamide cofactor of the H protein. In Staphylococcus carnosus (strain TM300), this protein is Probable glycine dehydrogenase (decarboxylating) subunit 1.